A 402-amino-acid polypeptide reads, in one-letter code: uncharacterized protein (402 aa).

Helical transmembrane passes span 13 to 33 (IGVL…VNLA), 68 to 88 (FFIQ…GMVV), 108 to 128 (LMAL…GDIL), 149 to 169 (LLIW…LTSF), 223 to 243 (LNYF…AAAA), 261 to 281 (LWMA…VTDK), 283 to 303 (ICLL…VVYL), 327 to 347 (YLMQ…GLYG), and 353 to 373 (AGVL…HLWL).

It localises to the cell membrane. Functionally, involved in transport. This is an uncharacterized protein from Bacillus subtilis (strain 168).